The following is a 589-amino-acid chain: Kelch-like protein 25 (589 aa).

The 69-residue stretch at 46-114 (TDVTLWAGDR…AYSSRIVINE (69 aa)) folds into the BTB domain. The BACK domain occupies 149-250 (CLGMMVLSDA…LPSDCLKNAV (102 aa)). 6 Kelch repeats span residues 296 to 340 (TLLI…AIGC), 341 to 388 (KVYV…ELEN), 389 to 444 (CLYV…SAKL), 446 to 492 (LFVF…VLGS), 493 to 538 (QIFI…ASGN), and 539 to 585 (KLYV…STWK).

Component of the BCR(KLHL25) E3 ubiquitin ligase complex, at least composed of CUL3, KLHL25 and RBX1.

It participates in protein modification; protein ubiquitination. In terms of biological role, substrate-specific adapter of a BCR (BTB-CUL3-RBX1) E3 ubiquitin ligase complex involved in various processes, such as translation homeostasis and lipid synthesis. The BCR(KLHL25) ubiquitin ligase complex acts by mediating ubiquitination of hypophosphorylated EIF4EBP1 (4E-BP1): ubiquitination and subsequent degradation of hypophosphorylated EIF4EBP1 (4E-BP1) probably serves as a homeostatic mechanism to maintain translation and prevent eIF4E inhibition when eIF4E levels are low. The BCR(KLHL25) complex does not target EIF4EBP1 (4E-BP1) when it is hyperphosphorylated or associated with eIF4E. The BCR(KLHL25) complex also acts as a regulator of lipid synthesis by mediating ubiquitination and degradation of ACLY, thereby inhibiting lipid synthesis. BCR(KLHL25)-mediated degradation of ACLY promotes fatty acid oxidation and is required for differentiation of inducible regulatory T (iTreg) cells. This Mus musculus (Mouse) protein is Kelch-like protein 25.